The primary structure comprises 833 residues: Leucine--tRNA ligase (833 aa).

A 'HIGH' region motif is present at residues 41–52 (PYPSGAGLHVGH). The 'KMSKS' region signature appears at 610 to 614 (KMSKS). Lys613 provides a ligand contact to ATP.

It belongs to the class-I aminoacyl-tRNA synthetase family.

It is found in the cytoplasm. The catalysed reaction is tRNA(Leu) + L-leucine + ATP = L-leucyl-tRNA(Leu) + AMP + diphosphate. This chain is Leucine--tRNA ligase, found in Streptococcus pneumoniae serotype 19F (strain G54).